The following is a 140-amino-acid chain: MRHRTIVCPLIENKGHYLLCKMAADRGVFPGQWALSGGVEPGERIEEALRREIREELGEKLILTHIAPWCFRDDTRVKTYPDGHQETIYMIYLIFNCVSANRDVTINEEFDDYAWVKAEDLKNYDLNAATRVTLSLKGLL.

The Nudix hydrolase domain occupies 1-140 (MRHRTIVCPL…RVTLSLKGLL (140 aa)). The short motif at 38–58 (GVEPGERIEEALRREIREELG) is the Nudix box element.

It belongs to the Nudix hydrolase family. NudI subfamily. Monomer. Mg(2+) is required as a cofactor.

The catalysed reaction is a ribonucleoside 5'-triphosphate + H2O = a ribonucleoside 5'-phosphate + diphosphate + H(+). It carries out the reaction a 2'-deoxyribonucleoside 5'-triphosphate + H2O = a 2'-deoxyribonucleoside 5'-phosphate + diphosphate + H(+). The enzyme catalyses dUTP + H2O = dUMP + diphosphate + H(+). It catalyses the reaction dTTP + H2O = dTMP + diphosphate + H(+). The catalysed reaction is dCTP + H2O = dCMP + diphosphate + H(+). Its function is as follows. Catalyzes the hydrolysis of nucleoside triphosphates, with a preference for pyrimidine deoxynucleoside triphosphates (dUTP, dTTP and dCTP). The chain is Nucleoside triphosphatase NudI from Klebsiella pneumoniae subsp. pneumoniae (strain ATCC 700721 / MGH 78578).